The following is a 312-amino-acid chain: Olfactory receptor 10D3 (312 aa).

Residues M1–T26 lie on the Extracellular side of the membrane. Residues L27–V47 form a helical membrane-spanning segment. Residues A48 to T57 are Cytoplasmic-facing. The helical transmembrane segment at P58–C78 threads the bilayer. Topologically, residues P79–C97 are extracellular. The cysteines at positions 97 and 179 are disulfide-linked. A helical membrane pass occupies residues V98–M118. Over A119–R139 the chain is Cytoplasmic. Residues I140–T160 form a helical membrane-spanning segment. Topologically, residues S161–R197 are extracellular. The helical transmembrane segment at V198 to Y218 threads the bilayer. The Cytoplasmic portion of the chain corresponds to T219 to S239. Residues T240–L260 traverse the membrane as a helical segment. Residues Q261–P266 lie on the Extracellular side of the membrane. A helical membrane pass occupies residues M267 to I287. Topologically, residues Y288–S312 are cytoplasmic.

The protein belongs to the G-protein coupled receptor 1 family.

Its subcellular location is the cell membrane. Its function is as follows. Odorant receptor. This is Olfactory receptor 10D3 from Homo sapiens (Human).